Here is a 484-residue protein sequence, read N- to C-terminus: Glycogen synthase 2 (484 aa).

An ADP-alpha-D-glucose-binding site is contributed by arginine 15.

This sequence belongs to the glycosyltransferase 1 family. Bacterial/plant glycogen synthase subfamily.

It catalyses the reaction [(1-&gt;4)-alpha-D-glucosyl](n) + ADP-alpha-D-glucose = [(1-&gt;4)-alpha-D-glucosyl](n+1) + ADP + H(+). Its pathway is glycan biosynthesis; glycogen biosynthesis. Its function is as follows. Synthesizes alpha-1,4-glucan chains using ADP-glucose. The sequence is that of Glycogen synthase 2 from Geobacter sulfurreducens (strain ATCC 51573 / DSM 12127 / PCA).